We begin with the raw amino-acid sequence, 226 residues long: Ribonuclease 3 (226 aa).

One can recognise an RNase III domain in the interval leucine 7–aspartate 129. Glutamate 42 contacts Mg(2+). Residue aspartate 46 is part of the active site. Mg(2+)-binding residues include aspartate 115 and glutamate 118. Glutamate 118 is a catalytic residue. The DRBM domain maps to aspartate 156–glutamine 226.

It belongs to the ribonuclease III family. As to quaternary structure, homodimer. Mg(2+) serves as cofactor.

The protein localises to the cytoplasm. It carries out the reaction Endonucleolytic cleavage to 5'-phosphomonoester.. Digests double-stranded RNA. Involved in the processing of primary rRNA transcript to yield the immediate precursors to the large and small rRNAs (23S and 16S). Processes some mRNAs, and tRNAs when they are encoded in the rRNA operon. Processes pre-crRNA and tracrRNA of type II CRISPR loci if present in the organism. In Shewanella amazonensis (strain ATCC BAA-1098 / SB2B), this protein is Ribonuclease 3.